A 126-amino-acid chain; its full sequence is NADH-quinone oxidoreductase subunit A (126 aa).

Transmembrane regions (helical) follow at residues 16–36 (ILVLLAMAIGLGLILIAAAAI), 73–93 (ILFIIFDLEVAFLFPWAVAFG), and 95–115 (MSMTAFWSMMVFLSVLTVGFA).

Belongs to the complex I subunit 3 family. In terms of assembly, NDH-1 is composed of 14 different subunits. Subunits NuoA, H, J, K, L, M, N constitute the membrane sector of the complex.

It is found in the cell inner membrane. The enzyme catalyses a quinone + NADH + 5 H(+)(in) = a quinol + NAD(+) + 4 H(+)(out). In terms of biological role, NDH-1 shuttles electrons from NADH, via FMN and iron-sulfur (Fe-S) centers, to quinones in the respiratory chain. The immediate electron acceptor for the enzyme in this species is believed to be ubiquinone. Couples the redox reaction to proton translocation (for every two electrons transferred, four hydrogen ions are translocated across the cytoplasmic membrane), and thus conserves the redox energy in a proton gradient. This Rhodobacter capsulatus (Rhodopseudomonas capsulata) protein is NADH-quinone oxidoreductase subunit A.